Reading from the N-terminus, the 632-residue chain is Pescadillo homolog (632 aa).

Positions 306 to 341 are disordered; the sequence is GDDADVDMDEGAKETDEEEDEDFVERPSKAQEVDDV. The span at 307 to 328 shows a compositional bias: acidic residues; that stretch reads DDADVDMDEGAKETDEEEDEDF. One can recognise a BRCT domain in the interval 361 to 459; that stretch reads RQNLLFSPYT…KIISSEGYGP (99 aa). Disordered stretches follow at residues 485-535, 565-585, and 601-632; these read GEKA…QNPS, TKVH…EEDL, and MQYS…EAKA. Positions 492 to 516 are enriched in acidic residues; it reads QEGEEEEEAAEQDEGESEDEEEDGK. A compositionally biased stretch (low complexity) spans 521-531; sequence AEYPPALLAAA. 2 stretches are compositionally biased toward basic and acidic residues: residues 576-585 and 605-616; these read QKEKKGEEDL and NREKAAEKEKLE. Residues 595-632 are a coiled coil; it reads AKLYEKMQYSNREKAAEKEKLEKKRKAIEKRKAKEAKA.

Belongs to the pescadillo family. In terms of assembly, component of the NOP7 complex, composed of ERB1, NOP7 and YTM1. The complex is held together by ERB1, which interacts with NOP7 via its N-terminal domain and with YTM1 via a high-affinity interaction between the seven-bladed beta-propeller domains of the 2 proteins. The NOP7 complex associates with the 66S pre-ribosome.

Its subcellular location is the nucleus. It localises to the nucleolus. The protein resides in the nucleoplasm. Component of the NOP7 complex, which is required for maturation of the 25S and 5.8S ribosomal RNAs and formation of the 60S ribosome. This Cryptococcus neoformans var. neoformans serotype D (strain B-3501A) (Filobasidiella neoformans) protein is Pescadillo homolog.